A 493-amino-acid polypeptide reads, in one-letter code: Glutamyl-tRNA(Gln) amidotransferase subunit A (493 aa).

Active-site charge relay system residues include Lys-78 and Ser-158. The Acyl-ester intermediate role is filled by Ser-182.

Belongs to the amidase family. GatA subfamily. In terms of assembly, heterotrimer of A, B and C subunits.

The enzyme catalyses L-glutamyl-tRNA(Gln) + L-glutamine + ATP + H2O = L-glutaminyl-tRNA(Gln) + L-glutamate + ADP + phosphate + H(+). In terms of biological role, allows the formation of correctly charged Gln-tRNA(Gln) through the transamidation of misacylated Glu-tRNA(Gln) in organisms which lack glutaminyl-tRNA synthetase. The reaction takes place in the presence of glutamine and ATP through an activated gamma-phospho-Glu-tRNA(Gln). This is Glutamyl-tRNA(Gln) amidotransferase subunit A from Rickettsia africae (strain ESF-5).